Consider the following 306-residue polypeptide: MNQLVVAFPFWHWLVEPLQYEFLIRAIWVSAFVGLVCAVLSCYITLKGWSLMGDAISHAVVPGVVLAYALNIPFAIGAFTFGFGATVAIGYVKSKTRLKEDAVIGIVFTGFFALGLVLVTKIPSNVDLFHILFGNVLGISQQDIIQTLIAGSITLIVILLRRKDLLLFCFDPNHAKAIGLRTQVMYYTLLSVLALTIVAALQTAGIILVISMLVTPGSIGYLLSDRFDHMLWYSVVSSVLSCVLGTYLSYHFDVSTGGMIVVILTTLFVIAMIGAPKYGILAQEWRKRSGPNPEDDENQTVVVDQV.

Topologically, residues 1 to 25 (MNQLVVAFPFWHWLVEPLQYEFLIR) are periplasmic. The helical transmembrane segment at 26–46 (AIWVSAFVGLVCAVLSCYITL) threads the bilayer. The Cytoplasmic portion of the chain corresponds to 47–48 (KG). The chain crosses the membrane as a helical span at residues 49 to 69 (WSLMGDAISHAVVPGVVLAYA). Over 70-71 (LN) the chain is Periplasmic. A helical membrane pass occupies residues 72–92 (IPFAIGAFTFGFGATVAIGYV). The Cytoplasmic portion of the chain corresponds to 93–101 (KSKTRLKED). A helical membrane pass occupies residues 102–122 (AVIGIVFTGFFALGLVLVTKI). Residues 123–141 (PSNVDLFHILFGNVLGISQ) lie on the Periplasmic side of the membrane. A helical membrane pass occupies residues 142–162 (QDIIQTLIAGSITLIVILLRR). The Cytoplasmic portion of the chain corresponds to 163–179 (KDLLLFCFDPNHAKAIG). The chain crosses the membrane as a helical span at residues 180-200 (LRTQVMYYTLLSVLALTIVAA). Residues 201 to 202 (LQ) lie on the Periplasmic side of the membrane. The helical transmembrane segment at 203-223 (TAGIILVISMLVTPGSIGYLL) threads the bilayer. Over 224-228 (SDRFD) the chain is Cytoplasmic. A helical transmembrane segment spans residues 229 to 249 (HMLWYSVVSSVLSCVLGTYLS). Residues 250-255 (YHFDVS) are Periplasmic-facing. A helical membrane pass occupies residues 256 to 276 (TGGMIVVILTTLFVIAMIGAP). Over 277–306 (KYGILAQEWRKRSGPNPEDDENQTVVVDQV) the chain is Cytoplasmic.

This sequence belongs to the ABC-3 integral membrane protein family.

Its subcellular location is the cell membrane. Functionally, part of an ATP-driven transport system for manganese. This chain is Manganese transport system membrane protein MntB (mntB), found in Synechocystis sp. (strain ATCC 27184 / PCC 6803 / Kazusa).